A 1423-amino-acid chain; its full sequence is uncharacterized protein (1423 aa).

Positions 1-28 are cleaved as a signal peptide; the sequence is MTSSVRLAFLATLLLLLPLEAQIQQANS. At 29 to 1321 the chain is on the extracellular side; that stretch reads ANVNQNVGQQ…RSREKQNFLT (1293 aa). N94, N306, N355, N483, N666, and N903 each carry an N-linked (GlcNAc...) asparagine glycan. The 164-residue stretch at 184 to 347 folds into the NIDO domain; the sequence is SFFGQSASKA…GRYMFRVDDV (164 aa). One can recognise an AMOP domain in the interval 638–818; sequence VKKKSLEMCH…FRCQMFYWRR (181 aa). A helical membrane pass occupies residues 1322 to 1342; it reads WLAIIGGIFGVLVFVILIFLC. The Cytoplasmic segment spans residues 1343–1423; the sequence is CWIVKQKKKG…EDLHGLKTSV (81 aa). The tract at residues 1364-1401 is disordered; that stretch reads SRSSMTGSRGGKKYPIHESEPLNEKRFDADTYRDDDFY. Over residues 1378–1401 the composition is skewed to basic and acidic residues; it reads PIHESEPLNEKRFDADTYRDDDFY.

Its subcellular location is the membrane. This is an uncharacterized protein from Caenorhabditis elegans.